Here is a 728-residue protein sequence, read N- to C-terminus: MSNEGKCPFNHGKRNGTTNRDWWPNQLNLKILHQHSSEADPMDPGFDYAEAFNSLDLAAVKADLRALMTASQDWWPADFGHYGPFFVRMAWHSAGTYRTGDGRGGAGRGQQRFAPLNSWPDNVGLDKARRLIWPVKQKYGRKISWADLIVLTGNVALESMGFKTFGFAGGREDSWEPDEDVYWGMESTWLDDKRYSGDRQLETPLAAVQMGLIYVNPEGPNGNPDPLASARDIRETFARMAMNDEETVALIAGGHTFGKTHGAGDASHVGPEPEAAPLEQMGLGWKSSFGSGKAGDAIGSGLEVIWTSTPTQWSNNFFWNLFGYDWELTKSPAGAHQWQPKGGAGADSVPDPFEPGKRRVPTMLTSDIALRADPTYEKISRRFFENPNEFAEAFARAWFKLTHRDMGPRVRYLGPEVPSEELLWQDPIPMPDHPQVDEQDVSALKAKVLASGLSVSELVSTAWASASTFRGSDKRGGANGARVRLAPQKDWEVNQPAQLATVLEVLGALQVEFNRAATGGKQVSLADLIVIAGNAGVEQAAAAAGVEITVPFTPGRGDASAEQTDVDSMAVLEPIADGFRNYLKGAYTIPAEKLLIDKAQLLSLSAPEMTVLIGGLRVLGTNVGDSKHGVFTDRREVLTNDFFRNLLDMGTEWKPTSEANEAYEGRDRATGELKWLASRVDLVFGSHSQLRALSEVYGSEDSQQKFVRDFVAAWTKVMNADRFDIKHN.

The interval 1–20 is disordered; that stretch reads MSNEGKCPFNHGKRNGTTNR. A cross-link (tryptophyl-tyrosyl-methioninium (Trp-Tyr) (with M-240)) is located at residues 91 to 214; the sequence is WHSAGTYRTG…LAAVQMGLIY (124 aa). His92 acts as the Proton acceptor in catalysis. Positions 214–240 form a cross-link, tryptophyl-tyrosyl-methioninium (Tyr-Met) (with W-91); that stretch reads YVNPEGPNGNPDPLASARDIRETFARM. Residue His255 participates in heme b binding. A disordered region spans residues 335 to 355; it reads AHQWQPKGGAGADSVPDPFEP.

This sequence belongs to the peroxidase family. Peroxidase/catalase subfamily. Homodimer or homotetramer. Requires heme b as cofactor. Post-translationally, formation of the three residue Trp-Tyr-Met cross-link is important for the catalase, but not the peroxidase activity of the enzyme.

It carries out the reaction H2O2 + AH2 = A + 2 H2O. The enzyme catalyses 2 H2O2 = O2 + 2 H2O. Functionally, bifunctional enzyme with both catalase and broad-spectrum peroxidase activity. The sequence is that of Catalase-peroxidase 2 from Burkholderia cenocepacia (strain HI2424).